We begin with the raw amino-acid sequence, 372 residues long: Actin-related protein 2/3 complex subunit 1B (372 aa).

WD repeat units lie at residues F6–V45, E50–T89, R94–K135, P140–R179, S242–S280, and L324–K367.

Belongs to the WD repeat ARPC1 family. As to quaternary structure, component of the Arp2/3 complex composed of ACTR2/ARP2, ACTR3/ARP3, ARPC1B/p41-ARC, ARPC2/p34-ARC, ARPC3/p21-ARC, ARPC4/p20-ARC and ARPC5/p16-ARC.

The protein localises to the cytoplasm. It is found in the cytoskeleton. Its subcellular location is the nucleus. Component of the Arp2/3 complex, a multiprotein complex that mediates actin polymerization upon stimulation by nucleation-promoting factor (NPF). The Arp2/3 complex mediates the formation of branched actin networks in the cytoplasm, providing the force for cell motility. In addition to its role in the cytoplasmic cytoskeleton, the Arp2/3 complex also promotes actin polymerization in the nucleus, thereby regulating gene transcription and repair of damaged DNA. The Arp2/3 complex promotes homologous recombination (HR) repair in response to DNA damage by promoting nuclear actin polymerization, leading to drive motility of double-strand breaks (DSBs). This Bos taurus (Bovine) protein is Actin-related protein 2/3 complex subunit 1B (ARPC1B).